The primary structure comprises 251 residues: Segregation and condensation protein A (251 aa).

Belongs to the ScpA family. In terms of assembly, component of a cohesin-like complex composed of ScpA, ScpB and the Smc homodimer, in which ScpA and ScpB bind to the head domain of Smc. The presence of the three proteins is required for the association of the complex with DNA.

The protein resides in the cytoplasm. Functionally, participates in chromosomal partition during cell division. May act via the formation of a condensin-like complex containing Smc and ScpB that pull DNA away from mid-cell into both cell halves. The chain is Segregation and condensation protein A from Clostridium botulinum (strain Alaska E43 / Type E3).